The sequence spans 344 residues: Flavonoid 7-O-methyltransferase 1B (344 aa).

D211 lines the S-adenosyl-L-methionine pocket. The active-site Proton acceptor is H249.

It belongs to the class I-like SAM-binding methyltransferase superfamily. Cation-independent O-methyltransferase family. As to quaternary structure, homodimer.

The enzyme catalyses scutellarein + S-adenosyl-L-methionine = scutellarein 7-methyl ether + S-adenosyl-L-homocysteine. The catalysed reaction is 4',7,8-trihydroxyflavone + S-adenosyl-L-methionine = 4',8-dihydroxy-7-methoxyflavone + S-adenosyl-L-homocysteine. It carries out the reaction isorhamnetin + S-adenosyl-L-methionine = rhamnacene + S-adenosyl-L-homocysteine + H(+). It catalyses the reaction kaempferol + S-adenosyl-L-methionine = kaempferol 7-methyl ether + S-adenosyl-L-homocysteine + H(+). The enzyme catalyses (2S)-naringenin + S-adenosyl-L-methionine = (2S)-sakuranetin + S-adenosyl-L-homocysteine + H(+). The catalysed reaction is quercetin + S-adenosyl-L-methionine = rhamnetin + S-adenosyl-L-homocysteine + H(+). It carries out the reaction apigenin + S-adenosyl-L-methionine = genkwanin + S-adenosyl-L-homocysteine + H(+). It catalyses the reaction luteolin + S-adenosyl-L-methionine = luteolin 7-methyl ether + S-adenosyl-L-homocysteine + H(+). The protein operates within flavonoid metabolism. Functionally, flavonoid 7-O-methyltransferase involved in the biosynthesis of polymethoxylated flavonoids natural products such as pebrellin, aroma compounds which contribute to the flavor of peppermint, and exhibit pharmacological activities such as anti-allergic, anti-oxidant, antibacterial, anti-proliferative, and anti-inflammatory effects. Catalyzes S-adenosylmethionine-dependent regioselective 7-O-methylation of flavonoids; active on various hydroxylated flavonoid substrates, including luteolin (LUT), quercetin, kaempferol, isorhamnetin, apigenin (API), scutellarein (6-hydroxy-apigenin, 6-OH-API, SCU), 7,8,4'-trihydroxy-flavone and naringenin (NAR), and, with a lower efficiency, 7,8,3',4'-tetrahydroxy-flavone, taxifolin and hesperetin. The sequence is that of Flavonoid 7-O-methyltransferase 1B from Mentha piperita (Peppermint).